The primary structure comprises 897 residues: Interleukin enhancer-binding factor 3 (897 aa).

Residues 5–378 (RIFVNDDRHV…PMKRPMEEDG (374 aa)) form the DZF domain. The tract at residues 52-85 (QEKGNSELSEAENMDTPPDDESKEGAGEQKAEHM) is disordered. Acidic residues predominate over residues 60-73 (SEAENMDTPPDDES). The residue at position 67 (Thr-67) is a Phosphothreonine. Residues 74–85 (KEGAGEQKAEHM) are compositionally biased toward basic and acidic residues. Lys-100 carries the post-translational modification N6-acetyllysine. Thr-188 is subject to Phosphothreonine; by PKR. Ser-190 carries the phosphoserine modification. Lys-297 participates in a covalent cross-link: Glycyl lysine isopeptide (Lys-Gly) (interchain with G-Cter in ubiquitin). Phosphothreonine; by PKR is present on Thr-315. Lys-348 participates in a covalent cross-link: Glycyl lysine isopeptide (Lys-Gly) (interchain with G-Cter in SUMO1). The disordered stretch occupies residues 363-401 (TTYAITPMKRPMEEDGEEKSPSKKKKKIQKKEEKAEPPQ). Residues 371 to 389 (KRPMEEDGEEKSPSKKKKK) carry the Bipartite nuclear localization signal motif. A compositionally biased stretch (basic and acidic residues) spans 372-383 (RPMEEDGEEKSP). Ser-382 and Ser-384 each carry phosphoserine. Residue Lys-396 forms a Glycyl lysine isopeptide (Lys-Gly) (interchain with G-Cter in SUMO2) linkage. The 70-residue stretch at 398 to 467 (EPPQAMNALM…AVKVLQDMGL (70 aa)) folds into the DRBM 1 domain. Lys-460 carries the post-translational modification N6-acetyllysine. Disordered regions lie at residues 466–524 (GLPT…LTKH), 624–662 (GMGGPMHNEAPPPPNIRGRGRGGNIRGRGRGRGFGGTNH), and 720–897 (GDSY…YQYR). Basic and acidic residues predominate over residues 472–481 (EGRDSSKGED). 4 positions are modified to phosphoserine: Ser-476, Ser-477, Ser-482, and Ser-486. A Glycyl lysine isopeptide (Lys-Gly) (interchain with G-Cter in SUMO2) cross-link involves residue Lys-489. The segment covering 499–508 (VEAVSNPSSV) has biased composition (low complexity). One can recognise a DRBM 2 domain in the interval 524 to 590 (HGKNPVMELN…ALAALEKLFP (67 aa)). The interaction with PRMT1 stretch occupies residues 609–897 (RGGPKFAAKP…TEHSMNYQYR (289 aa)). A compositionally biased stretch (gly residues) spans 644–662 (RGGNIRGRGRGRGFGGTNH). Composition is skewed to low complexity over residues 745–769 (SYSSGYQSHQGQQQPYNQSQYSSYG), 783–794 (GSYSSYSNSYNS), and 802–812 (DYSYDSKFNYS). Ser-794, Ser-812, Ser-814, and Ser-818 each carry phosphoserine. Positions 813-822 (GSGGRSGGNS) are enriched in gly residues. A compositionally biased stretch (low complexity) spans 823–833 (YGSSGSSYNTG). Gly residues predominate over residues 834–844 (SHGGYGAGSGG). Residues 845-885 (SSSYQGKQGGYSSQSNYSSPGSSQSYSGPASSYQSSQGGYS) are compositionally biased toward low complexity.

As to quaternary structure, identified in a IGF2BP1-dependent mRNP granule complex containing untranslated mRNAs. Interacts with FUS and SMN. Interacts (via C-terminus) with PRMT1. Forms a complex with ILF2. Can also bind to PRKDC/XRCC7: this may stabilize the interaction of PRKDC/XRCC7 and the heterodimeric complex of XRCC6/KU70 and XRCC5/KU80. Forms a heteromeric complex with ZNF346 and ILF3. Found in a nuclear export complex with XPO5, ILF3, Ran and double-stranded RNA or double-stranded minihelix VA1 RNA. Found in a nuclear export complex with XPO5, RAN, ILF3, ZNF346 and double-stranded RNA. Interacts with XPO5 and ZNF346. Forms a complex with ILF2, YLPM1, KHDRBS1, RBMX, NCOA5 and PPP1CA. Interacts with AGO1 and AGO2. Interacts with DHX36; this interaction occurs in a RNA-dependent manner. Interacts with ELAVL1; this interaction occurs in a RNA-dependent manner. Interacts with HAVCR2; this interaction promotes ILF3 ubiquitination and subsequent degradation. Phosphorylated at Thr-188 and Thr-315 by PKR in response to RNA viruses. This phosphorylation results in the dissociation of ILF2 from the ILF2-ILF3 complex resulting in a cytoplasmic sequestration of ILF3 where it can bind to viral RNAs and impede viral replication. In terms of processing, methylated by protein arginine N-methyltransferase 1.

It is found in the nucleus. It localises to the nucleolus. Its subcellular location is the cytoplasm. RNA-binding protein that plays an essential role in the biogenesis of circular RNAs (circRNAs) which are produced by back-splicing circularization of pre-mRNAs. Within the nucleus, promotes circRNAs processing by stabilizing the regulatory elements residing in the flanking introns of the circularized exons. Plays thereby a role in the back-splicing of a subset of circRNAs. As a consequence, participates in a wide range of transcriptional and post-transcriptional processes. Binds to poly-U elements and AU-rich elements (AREs) in the 3'-UTR of target mRNAs. Upon viral infection, ILF3 accumulates in the cytoplasm and participates in the innate antiviral response. Mechanistically, ILF3 becomes phosphorylated and activated by the double-stranded RNA-activated protein kinase/PKR which releases ILF3 from cellular mature circRNAs. In turn, unbound ILF3 molecules are able to interact with and thus inhibit viral mRNAs. In Rattus norvegicus (Rat), this protein is Interleukin enhancer-binding factor 3 (Ilf3).